The sequence spans 259 residues: 3'-5' ssDNA/RNA exonuclease TatD (259 aa).

A divalent metal cation contacts are provided by Glu-92, His-128, and His-153.

It belongs to the metallo-dependent hydrolases superfamily. TatD-type hydrolase family. TatD subfamily. In terms of assembly, monomer. Requires Mg(2+) as cofactor.

The protein resides in the cytoplasm. Its function is as follows. 3'-5' exonuclease that prefers single-stranded DNA and RNA. May play a role in the H(2)O(2)-induced DNA damage repair. This chain is 3'-5' ssDNA/RNA exonuclease TatD, found in Erwinia tasmaniensis (strain DSM 17950 / CFBP 7177 / CIP 109463 / NCPPB 4357 / Et1/99).